Here is a 1077-residue protein sequence, read N- to C-terminus: Error-prone DNA polymerase (1077 aa).

Belongs to the DNA polymerase type-C family. DnaE2 subfamily.

Its subcellular location is the cytoplasm. It carries out the reaction DNA(n) + a 2'-deoxyribonucleoside 5'-triphosphate = DNA(n+1) + diphosphate. Its function is as follows. DNA polymerase involved in damage-induced mutagenesis and translesion synthesis (TLS). It is not the major replicative DNA polymerase. The polypeptide is Error-prone DNA polymerase (Brucella abortus biovar 1 (strain 9-941)).